Consider the following 405-residue polypeptide: 2,3-diketo-5-methylthiopentyl-1-phosphate enolase (405 aa).

Lysine 91 (proton acceptor) is an active-site residue. Substrate-binding positions include lysine 140, 166–169 (KDDE), histidine 257, glycine 329, and 351–352 (GG). Mg(2+) is bound by residues lysine 166, aspartate 168, and glutamate 169. An N6-carboxylysine modification is found at lysine 166.

It belongs to the RuBisCO large chain family. Type IV subfamily. Homodimer. Requires Mg(2+) as cofactor.

It carries out the reaction 5-methylsulfanyl-2,3-dioxopentyl phosphate = 2-hydroxy-5-methylsulfanyl-3-oxopent-1-enyl phosphate. It participates in amino-acid biosynthesis; L-methionine biosynthesis via salvage pathway; L-methionine from S-methyl-5-thio-alpha-D-ribose 1-phosphate: step 3/6. Functionally, catalyzes the enolization of 2,3-diketo-5-methylthiopentyl-1-phosphate (DK-MTP-1-P) into 2-hydroxy-3-keto-5-methylthiopentenyl-1-phosphate (HK-MTPenyl-1-P). This is 2,3-diketo-5-methylthiopentyl-1-phosphate enolase from Bacillus licheniformis (strain ATCC 14580 / DSM 13 / JCM 2505 / CCUG 7422 / NBRC 12200 / NCIMB 9375 / NCTC 10341 / NRRL NRS-1264 / Gibson 46).